The primary structure comprises 78 residues: Putative defensin-like protein 288 (78 aa).

A signal peptide spans Met-1–Trp-21.

The protein belongs to the DEFL family.

The protein resides in the secreted. In Arabidopsis thaliana (Mouse-ear cress), this protein is Putative defensin-like protein 288.